The chain runs to 524 residues: Cytochrome P450 4F3 (524 aa).

The helical transmembrane segment at 15 to 35 (AASPWLLLLLVGASCLLAYIL) threads the bilayer. Cys-468 lines the heme pocket.

Belongs to the cytochrome P450 family. Requires heme as cofactor.

It is found in the endoplasmic reticulum membrane. Its subcellular location is the microsome membrane. It carries out the reaction leukotriene B4 + reduced [NADPH--hemoprotein reductase] + O2 = 18-hydroxy-leukotriene B4 + oxidized [NADPH--hemoprotein reductase] + H2O + H(+). The enzyme catalyses leukotriene B4 + reduced [NADPH--hemoprotein reductase] + O2 = 19-hydroxy-leukotriene B4 + oxidized [NADPH--hemoprotein reductase] + H2O + H(+). It functions in the pathway lipid metabolism; leukotriene B4 degradation. Its function is as follows. A cytochrome P450 monooxygenase involved in the metabolism of the pro-inflammatory lipid mediator leukotriene B4 (LTB4). Hydroxylates at the omega-1 and omega-2 positions LTB4. This oxidation step leads to LTB4 inactivation, which is postulated to be a crucial part of the resolution of inflammation. Mechanistically, uses molecular oxygen inserting one oxygen atom into a substrate, and reducing the second into a water molecule, with two electrons provided by NADPH via cytochrome P450 reductase (CPR; NADPH-ferrihemoprotein reductase). This is Cytochrome P450 4F3 from Rattus norvegicus (Rat).